The following is a 1375-amino-acid chain: Protein lingerer (1375 aa).

Residues 1–69 (MSTQTRSGGG…KAQPKATTEQ (69 aa)) are disordered. Basic and acidic residues predominate over residues 53 to 62 (SKTDKPEKAQ). Residues 84–124 (QINEKVLLLLTMTQRSEEEVCCALNECDYDLEAAANFLIEE) form the UBA domain. Low complexity-rich tracts occupy residues 142–161 (ANNT…GNGN) and 173–184 (SNRGGTRGSSDS). The disordered stretch occupies residues 142–286 (ANNTADGAAG…GSGRGGNANE (145 aa)). Over residues 185–204 (RGWRGRETRENERNQRESRE) the composition is skewed to basic and acidic residues. Gly residues predominate over residues 228–282 (RNGGGRSGPGGGGRGGGFVSRSGRGGGRMGGRTGGPRGDRGSGGPGGAYGSGRGG). Tyr-321 carries the post-translational modification Phosphotyrosine. A Phosphoserine modification is found at Ser-324. Composition is skewed to polar residues over residues 374–387 (VQQG…SSSG) and 395–412 (ATLS…SAAV). Disordered stretches follow at residues 374–453 (VQQG…ASPD) and 613–646 (FEPL…QQQQ). The span at 426–441 (SGAGTGASAAAGGGAG) shows a compositional bias: gly residues. Low complexity-rich tracts occupy residues 442–453 (STPSSFVSASPD) and 629–646 (QQQQ…QQQQ). Ser-672 bears the Phosphoserine mark. Residue Thr-673 is modified to Phosphothreonine. Residue Ser-674 is modified to Phosphoserine. Residues 750 to 767 (QGYGSYQPSSYQQQAGSG) show a composition bias toward low complexity. Disordered stretches follow at residues 750-801 (QGYG…SGNA), 869-894 (SVST…GQTG), 987-1036 (KNTS…GGSG), 1203-1234 (SKGG…DLTS), and 1251-1277 (EKQS…TSAQ). The span at 768–781 (AQSGTGAVSGGGGT) shows a compositional bias: gly residues. 3 stretches are compositionally biased toward low complexity: residues 789-801 (GGSS…SGNA), 869-882 (SVST…NSGS), and 987-1008 (KNTS…TGNA). A compositionally biased stretch (gly residues) spans 1009–1036 (SGQGAGASTGGVGSSSGAGGAGSGGGSG). Residues 1265-1277 (MPNTQTAGGTSAQ) are compositionally biased toward polar residues.

At stage 11, expression is restricted to the neuroblasts, predominant in the central nervous system (CNS), including the brain and ventral nerve cord, and in the PNS. Later embryonic expression is seen in the gonads. Late third instar larvae show expression in the CNS, imaginal disks (including genital, eye-antennal, leg, wing and haltere disks), and gonads. In the larval brain, it is expressed in all of the glial cells and in clusters of neurons that projected contralaterally. In the larval ventral ganglion, it is expressed in subperineurial glia, peripheral exit glia, and a number of interneurons, but not in motor neurons. Isoform B is abundantly expressed in males and females. Isoform D is male specific and expressed at low levels.

It localises to the cytoplasm. Functionally, acts in the nervous system to mediate the control of copulatory organs during courtship. The protein is Protein lingerer of Drosophila melanogaster (Fruit fly).